We begin with the raw amino-acid sequence, 163 residues long: Large ribosomal subunit protein uL10 (163 aa).

Belongs to the universal ribosomal protein uL10 family. In terms of assembly, part of the ribosomal stalk of the 50S ribosomal subunit. The N-terminus interacts with L11 and the large rRNA to form the base of the stalk. The C-terminus forms an elongated spine to which L12 dimers bind in a sequential fashion forming a multimeric L10(L12)X complex.

Its function is as follows. Forms part of the ribosomal stalk, playing a central role in the interaction of the ribosome with GTP-bound translation factors. This chain is Large ribosomal subunit protein uL10, found in Actinobacillus pleuropneumoniae serotype 5b (strain L20).